The sequence spans 87 residues: Cell division topological specificity factor (87 aa).

The protein belongs to the MinE family.

Its function is as follows. Prevents the cell division inhibition by proteins MinC and MinD at internal division sites while permitting inhibition at polar sites. This ensures cell division at the proper site by restricting the formation of a division septum at the midpoint of the long axis of the cell. In Leptothrix cholodnii (strain ATCC 51168 / LMG 8142 / SP-6) (Leptothrix discophora (strain SP-6)), this protein is Cell division topological specificity factor.